A 411-amino-acid chain; its full sequence is Isocitrate dehydrogenase [NADP] peroxisomal (411 aa).

NADP(+) contacts are provided by residues 78-80 (TIT) and R85. Substrate is bound at residue T80. Residues 97 to 103 (SPNGTLR), R112, and R135 each bind substrate. Residue D254 coordinates Mn(2+). Residue K262 participates in NADP(+) binding. A Mn(2+)-binding site is contributed by D277. NADP(+) is bound by residues 312 to 317 (GTVTRH) and N330.

It belongs to the isocitrate and isopropylmalate dehydrogenases family. Requires Mg(2+) as cofactor. Mn(2+) serves as cofactor.

It is found in the peroxisome. It catalyses the reaction D-threo-isocitrate + NADP(+) = 2-oxoglutarate + CO2 + NADPH. Functionally, may play a role in N-alkane metabolism, glutamate synthesis, and/or NADPH generation in the peroxisomes. The sequence is that of Isocitrate dehydrogenase [NADP] peroxisomal (IDP2) from Candida tropicalis (Yeast).